The following is a 424-amino-acid chain: 3-phosphoshikimate 1-carboxyvinyltransferase (424 aa).

The 3-phosphoshikimate site is built by Lys21, Ser22, and Arg26. Lys21 contacts phosphoenolpyruvate. The phosphoenolpyruvate site is built by Gly92 and Arg120. Residues Ser163, Ser164, Gln165, Ser191, Asp306, and Lys333 each coordinate 3-phosphoshikimate. Gln165 provides a ligand contact to phosphoenolpyruvate. The active-site Proton acceptor is the Asp306. The phosphoenolpyruvate site is built by Arg337, Arg379, and Lys405.

This sequence belongs to the EPSP synthase family. In terms of assembly, monomer.

It localises to the cytoplasm. The catalysed reaction is 3-phosphoshikimate + phosphoenolpyruvate = 5-O-(1-carboxyvinyl)-3-phosphoshikimate + phosphate. The protein operates within metabolic intermediate biosynthesis; chorismate biosynthesis; chorismate from D-erythrose 4-phosphate and phosphoenolpyruvate: step 6/7. In terms of biological role, catalyzes the transfer of the enolpyruvyl moiety of phosphoenolpyruvate (PEP) to the 5-hydroxyl of shikimate-3-phosphate (S3P) to produce enolpyruvyl shikimate-3-phosphate and inorganic phosphate. The polypeptide is 3-phosphoshikimate 1-carboxyvinyltransferase (Clostridium perfringens (strain 13 / Type A)).